A 204-amino-acid chain; its full sequence is RNA-free ribonuclease P (204 aa).

The protein belongs to the HARP family.

The enzyme catalyses Endonucleolytic cleavage of RNA, removing 5'-extranucleotides from tRNA precursor.. Its function is as follows. RNA-free RNase P that catalyzes the removal of the 5'-leader sequence from pre-tRNA to produce the mature 5'-terminus. The chain is RNA-free ribonuclease P from Pyrococcus horikoshii (strain ATCC 700860 / DSM 12428 / JCM 9974 / NBRC 100139 / OT-3).